The primary structure comprises 485 residues: U4/U6 small nuclear ribonucleoprotein Prp31 homolog (485 aa).

Disordered stretches follow at residues 1-36 and 329-361; these read MATLEDSFLADLDELSDNEAELDENDGDVGKEEEDV and IEKWQEPPPARQPKPLPVPDSEPKKRRGGRRLR. Acidic residues predominate over residues 11–36; the sequence is DLDELSDNEAELDENDGDVGKEEEDV. The 119-residue stretch at 216–334 folds into the Nop domain; the sequence is IAPNLSAIVG…IRKKIEKWQE (119 aa). The segment covering 334 to 348 has biased composition (pro residues); sequence EPPPARQPKPLPVPD. Residues 352 to 361 show a composition bias toward basic residues; that stretch reads KKRRGGRRLR. Positions 352–365 match the Nuclear localization signal motif; that stretch reads KKRRGGRRLRKMKE.

Belongs to the PRP31 family. As to quaternary structure, component of the U4/U6-U5 tri-snRNP complex composed of the U4, U6 and U5 snRNAs and pre-mRNA-splicing factors. Interacts with STA1 and SOP1.

It localises to the nucleus. The protein resides in the cajal body. Its function is as follows. Involved in pre-mRNA splicing. Required for the assembly of the U4/U5/U6 tri-snRNP complex, one of the building blocks of the spliceosome. Functions in association with STA1 and ZOP1 in spliceosome dynamics and pre-mRNA splicing. Required for transcriptional regulation and pre-mRNA splicing of cold-responsive genes, such as LTI78/RD29A, KIN2/COR6.6 or COR15A, especially under cold stress. May play a role in stress response. Involved in transcriptional gene silencing of endogenous transposable elements, independently of the RNA-directed DNA methylation (RdDM) pathway. Seems not to participate in the small RNA biogenesis of the RdDM pathway. This Arabidopsis thaliana (Mouse-ear cress) protein is U4/U6 small nuclear ribonucleoprotein Prp31 homolog.